Consider the following 62-residue polypeptide: MAIHDANYIVSTSEFSSGVLISNFLLFNFIIISHSSLLSNTTTTTTTTTTTTNTKSTLHRSG.

Residues 15–37 traverse the membrane as a helical segment; that stretch reads FSSGVLISNFLLFNFIIISHSSL. Residues 41–56 are compositionally biased toward low complexity; the sequence is TTTTTTTTTTTTNTKS. The interval 41 to 62 is disordered; the sequence is TTTTTTTTTTTTNTKSTLHRSG.

It is found in the membrane. This is an uncharacterized protein from Dictyostelium discoideum (Social amoeba).